A 348-amino-acid chain; its full sequence is Selenide, water dikinase (348 aa).

Residue Cys-17 is part of the active site. Residues Lys-20 and 48-50 (TRD) contribute to the ATP site. Asp-51 is a binding site for Mg(2+). Residues Asp-68, Asp-91, and 139-141 (GHS) each bind ATP. Asp-91 is a binding site for Mg(2+). A Mg(2+)-binding site is contributed by Asp-227.

Belongs to the selenophosphate synthase 1 family. Class I subfamily. In terms of assembly, homodimer. It depends on Mg(2+) as a cofactor.

It carries out the reaction hydrogenselenide + ATP + H2O = selenophosphate + AMP + phosphate + 2 H(+). Functionally, synthesizes selenophosphate from selenide and ATP. In Yersinia pseudotuberculosis serotype I (strain IP32953), this protein is Selenide, water dikinase.